The sequence spans 365 residues: Eukaryotic translation initiation factor 3 subunit H (365 aa).

Residues 11-160 (VKVEALVVMK…LRAFRLSPKF (150 aa)) enclose the MPN domain.

This sequence belongs to the eIF-3 subunit H family. As to quaternary structure, component of the eukaryotic translation initiation factor 3 (eIF-3) complex.

It localises to the cytoplasm. Component of the eukaryotic translation initiation factor 3 (eIF-3) complex, which is involved in protein synthesis of a specialized repertoire of mRNAs and, together with other initiation factors, stimulates binding of mRNA and methionyl-tRNAi to the 40S ribosome. The eIF-3 complex specifically targets and initiates translation of a subset of mRNAs involved in cell proliferation. The protein is Eukaryotic translation initiation factor 3 subunit H of Aspergillus fumigatus (strain CBS 144.89 / FGSC A1163 / CEA10) (Neosartorya fumigata).